The chain runs to 266 residues: Energy-coupling factor transporter ATP-binding protein EcfA2 (266 aa).

The ABC transporter domain occupies I3 to M238. Residue G43–T48 coordinates ATP. E164 (proton acceptor) is an active-site residue. Residues G220 to S266 are required for heterodimer formation.

This sequence belongs to the ABC transporter superfamily. Energy-coupling factor EcfA family. Forms a heterodimer with EcfA1. Forms a stable energy-coupling factor (ECF) transporter complex composed of 2 membrane-embedded substrate-binding proteins (S component, RibU, BioY), 2 ATP-binding proteins (A component) and 2 transmembrane proteins (T component) upon coexpression in E.coli. Stable subcomplexes with both A plus T components can also be isolated. This complex interacts with at least 2 substrate-specific components, BioY and RibU.

It is found in the cell inner membrane. Functionally, ATP-binding (A) component of a common energy-coupling factor (ECF) ABC-transporter complex. Unlike classic ABC transporters this ECF transporter provides the energy necessary to transport a number of different substrates. Expression of the complex plus RibU in E.coli allows riboflavin uptake; uptake does not occur in the absence of RibU or the EcfA1A2T complex. In Thermotoga maritima (strain ATCC 43589 / DSM 3109 / JCM 10099 / NBRC 100826 / MSB8), this protein is Energy-coupling factor transporter ATP-binding protein EcfA2 (ecfA2).